The sequence spans 212 residues: Ion-translocating oxidoreductase complex subunit G (212 aa).

A helical transmembrane segment spans residues 9 to 29 (ASLLGLFALLCTALVALVNQF). Thr-176 is subject to FMN phosphoryl threonine.

The protein belongs to the RnfG family. As to quaternary structure, the complex is composed of six subunits: RnfA, RnfB, RnfC, RnfD, RnfE and RnfG. FMN serves as cofactor.

Its subcellular location is the cell inner membrane. In terms of biological role, part of a membrane-bound complex that couples electron transfer with translocation of ions across the membrane. This Shewanella loihica (strain ATCC BAA-1088 / PV-4) protein is Ion-translocating oxidoreductase complex subunit G.